The chain runs to 162 residues: Interleukin-15 (162 aa).

The N-terminal stretch at 1–29 (MRISKPHLRSISIQCYLCLLLNSHFLTEA) is a signal peptide. Positions 30-48 (GIHVFILGCFSAGLPKTEA) are excised as a propeptide. Cystine bridges form between cysteine 83–cysteine 133 and cysteine 90–cysteine 136. Asparagine 127 carries N-linked (GlcNAc...) asparagine glycosylation.

Belongs to the IL-15/IL-21 family. In terms of tissue distribution, most abundant in placenta and skeletal muscle. It is also detected in the heart, lung, liver and kidney. IL15-S21AA is preferentially expressed in tissues such as testis and thymus.

It localises to the secreted. It is found in the cytoplasm. Its subcellular location is the nucleus. Cytokine that plays a major role in the development of inflammatory and protective immune responses to microbial invaders and parasites by modulating immune cells of both the innate and adaptive immune systems. Stimulates the proliferation of natural killer cells, T-cells and B-cells and promotes the secretion of several cytokines. In monocytes, induces the production of IL8 and monocyte chemotactic protein 1/CCL2, two chemokines that attract neutrophils and monocytes respectively to sites of infection. Unlike most cytokines, which are secreted in soluble form, IL15 is expressed in association with its high affinity IL15RA on the surface of IL15-producing cells and delivers signals to target cells that express IL2RB and IL2RG receptor subunits. Binding to its receptor triggers the phosphorylation of JAK1 and JAK3 and the recruitment and subsequent phosphorylation of signal transducer and activator of transcription-3/STAT3 and STAT5. In mast cells, induces the rapid tyrosine phosphorylation of STAT6 and thereby controls mast cell survival and release of cytokines such as IL4. This is Interleukin-15 (IL15) from Homo sapiens (Human).